The chain runs to 334 residues: MKEIIEKLAKFENLSGVEMTDVIERIVTGRVTEAQIASLLLALKMKGETPEERTAIAQVMRGHAQHIPTEIHDAMDNCGTGGDKSFSFNISTTAAFVLAGGGIHMAKHGNRSISSKSGSADVLEALGINLDLKPAELGKVFDKTGIVFLFAKNMHPAMKYIMPARLELGIPTIMNLTGPLIHPMALETQLLGISRPELLESTAQVLKNMGRKRAIVVAGPEGLDEAGLNGTTKIALLENGEISLSSFTPEDLGMEDYAMEDIRGGNAQENAEILLSVLKNEASPFLETTVLNAGLGFYANGKIDSIKEGVALARQVIARGKALEKLRLLQEYQK.

5-phospho-alpha-D-ribose 1-diphosphate is bound by residues Gly-79, 82–83, Ser-87, 89–92, 107–115, and Ser-119; these read GD, NIST, and KHGNRSISS. Anthranilate is bound at residue Gly-79. Ser-91 serves as a coordination point for Mg(2+). Asn-110 serves as a coordination point for anthranilate. Arg-165 provides a ligand contact to anthranilate. Mg(2+) contacts are provided by Asp-224 and Glu-225.

Belongs to the anthranilate phosphoribosyltransferase family. As to quaternary structure, homodimer. Requires Mg(2+) as cofactor.

It catalyses the reaction N-(5-phospho-beta-D-ribosyl)anthranilate + diphosphate = 5-phospho-alpha-D-ribose 1-diphosphate + anthranilate. The protein operates within amino-acid biosynthesis; L-tryptophan biosynthesis; L-tryptophan from chorismate: step 2/5. Its function is as follows. Catalyzes the transfer of the phosphoribosyl group of 5-phosphorylribose-1-pyrophosphate (PRPP) to anthranilate to yield N-(5'-phosphoribosyl)-anthranilate (PRA). This is Anthranilate phosphoribosyltransferase from Streptococcus pneumoniae (strain ATCC 700669 / Spain 23F-1).